The sequence spans 1122 residues: Angiopoietin-1 receptor (1122 aa).

An N-terminal signal peptide occupies residues methionine 1–glycine 22. The Extracellular portion of the chain corresponds to alanine 23 to leucine 746. Cysteine 44 and cysteine 102 are disulfide-bonded. In terms of domain architecture, Ig-like C2-type 1 spans cysteine 44–serine 123. Asparagine 140 and asparagine 158 each carry an N-linked (GlcNAc...) asparagine glycan. EGF-like domains follow at residues arginine 210 to glutamate 252, alanine 254 to asparagine 299, and alanine 301 to glutamate 341. 13 disulfides stabilise this stretch: cysteine 211–cysteine 220, cysteine 224–cysteine 233, cysteine 227–cysteine 240, cysteine 242–cysteine 251, cysteine 255–cysteine 264, cysteine 268–cysteine 274, cysteine 280–cysteine 287, cysteine 289–cysteine 298, cysteine 302–cysteine 311, cysteine 315–cysteine 323, cysteine 317–cysteine 329, cysteine 331–cysteine 340, and cysteine 370–cysteine 424. The Ig-like C2-type 2 domain occupies proline 350 to serine 440. Asparagine 399, asparagine 438, asparagine 464, asparagine 558, asparagine 595, asparagine 648, and asparagine 690 each carry an N-linked (GlcNAc...) asparagine glycan. Fibronectin type-III domains are found at residues leucine 444 to isoleucine 539, proline 543 to aspartate 635, and glutamine 640 to histidine 733. A helical transmembrane segment spans residues leucine 747 to isoleucine 767. Residues methionine 768–alanine 1122 are Cytoplasmic-facing. One can recognise a Protein kinase domain in the interval isoleucine 822–leucine 1094. Residues isoleucine 828 to valine 836 and lysine 853 each bind ATP. Phosphotyrosine; by autocatalysis is present on tyrosine 858. Aspartate 962 (proton acceptor) is an active-site residue. Phosphotyrosine; by autocatalysis is present on residues tyrosine 990, tyrosine 1100, and tyrosine 1106.

It belongs to the protein kinase superfamily. Tyr protein kinase family. Tie subfamily. In terms of assembly, homodimer. Heterodimer with TIE1. Interacts with ANGPT1, ANGPT2 and ANGPT4. At cell-cell contacts in quiescent cells, forms a signaling complex composed of ANGPT1 plus TEK molecules from two adjoining cells. In the absence of endothelial cell-cell contacts, interaction with ANGPT1 mediates contacts with the extracellular matrix. Interacts (tyrosine phosphorylated) with TNIP2. Interacts (tyrosine phosphorylated) with SHC1 (via SH2 domain). Interacts with PTPRB; this promotes endothelial cell-cell adhesion. Interacts with DOK2, GRB2, GRB7, GRB14, PIK3R1 and PTPN11/SHP2. Colocalizes with DOK2 at contacts with the extracellular matrix in migrating cells. Post-translationally, proteolytic processing leads to the shedding of the extracellular domain (soluble TIE-2 alias sTIE-2). In terms of processing, autophosphorylated on tyrosine residues in response to ligand binding. Autophosphorylation occurs in trans, i.e. one subunit of the dimeric receptor phosphorylates tyrosine residues on the other subunit. Autophosphorylation occurs in a sequential manner, where Tyr-990 in the kinase activation loop is phosphorylated first, followed by autophosphorylation at Tyr-1106 and at additional tyrosine residues. ANGPT1-induced phosphorylation is impaired during hypoxia, due to increased expression of ANGPT2. Phosphorylation is important for interaction with GRB14, PIK3R1 and PTPN11. Phosphorylation at Tyr-1100 is important for interaction with GRB2 and GRB7. Phosphorylation at Tyr-1106 is important for interaction with DOK2 and for coupling to downstream signal transduction pathways in endothelial cells. Dephosphorylated by PTPRB. Ubiquitinated. The phosphorylated receptor is ubiquitinated and internalized, leading to its degradation. Specifically expressed in developing vascular endothelial cells. Abundantly expressed in lung and heart, moderately in brain, liver and kidney, and weakly in thymus, spleen and testis.

The protein localises to the cell membrane. It localises to the cell junction. Its subcellular location is the focal adhesion. The protein resides in the cytoplasm. It is found in the cytoskeleton. The protein localises to the secreted. The enzyme catalyses L-tyrosyl-[protein] + ATP = O-phospho-L-tyrosyl-[protein] + ADP + H(+). Angiopoietin binding leads to receptor dimerization and activation by autophosphorylation at Tyr-990 on the kinase activation loop. In terms of biological role, tyrosine-protein kinase that acts as a cell-surface receptor for ANGPT1, ANGPT2 and ANGPT4 and regulates angiogenesis, endothelial cell survival, proliferation, migration, adhesion and cell spreading, reorganization of the actin cytoskeleton, but also maintenance of vascular quiescence. Has anti-inflammatory effects by preventing the leakage of pro-inflammatory plasma proteins and leukocytes from blood vessels. Required for normal angiogenesis and heart development during embryogenesis. Required for postnatal hematopoiesis. After birth, activates or inhibits angiogenesis, depending on the context. Inhibits angiogenesis and promotes vascular stability in quiescent vessels, where endothelial cells have tight contacts. In quiescent vessels, ANGPT1 oligomers recruit TEK to cell-cell contacts, forming complexes with TEK molecules from adjoining cells, and this leads to preferential activation of phosphatidylinositol 3-kinase and the AKT1 signaling cascades. In migrating endothelial cells that lack cell-cell adhesions, ANGT1 recruits TEK to contacts with the extracellular matrix, leading to the formation of focal adhesion complexes, activation of PTK2/FAK and of the downstream kinases MAPK1/ERK2 and MAPK3/ERK1, and ultimately to the stimulation of sprouting angiogenesis. ANGPT1 signaling triggers receptor dimerization and autophosphorylation at specific tyrosine residues that then serve as binding sites for scaffold proteins and effectors. Signaling is modulated by ANGPT2 that has lower affinity for TEK, can promote TEK autophosphorylation in the absence of ANGPT1, but inhibits ANGPT1-mediated signaling by competing for the same binding site. Signaling is also modulated by formation of heterodimers with TIE1, and by proteolytic processing that gives rise to a soluble TEK extracellular domain. The soluble extracellular domain modulates signaling by functioning as decoy receptor for angiopoietins. TEK phosphorylates DOK2, GRB7, GRB14, PIK3R1, SHC1 and TIE1. The polypeptide is Angiopoietin-1 receptor (Tek) (Mus musculus (Mouse)).